Reading from the N-terminus, the 618-residue chain is Proline--tRNA ligase (618 aa).

Belongs to the class-II aminoacyl-tRNA synthetase family. ProS type 1 subfamily. As to quaternary structure, homodimer.

The protein localises to the cytoplasm. The catalysed reaction is tRNA(Pro) + L-proline + ATP = L-prolyl-tRNA(Pro) + AMP + diphosphate. Functionally, catalyzes the attachment of proline to tRNA(Pro) in a two-step reaction: proline is first activated by ATP to form Pro-AMP and then transferred to the acceptor end of tRNA(Pro). As ProRS can inadvertently accommodate and process non-cognate amino acids such as alanine and cysteine, to avoid such errors it has two additional distinct editing activities against alanine. One activity is designated as 'pretransfer' editing and involves the tRNA(Pro)-independent hydrolysis of activated Ala-AMP. The other activity is designated 'posttransfer' editing and involves deacylation of mischarged Ala-tRNA(Pro). The misacylated Cys-tRNA(Pro) is not edited by ProRS. The chain is Proline--tRNA ligase from Streptococcus pyogenes serotype M2 (strain MGAS10270).